We begin with the raw amino-acid sequence, 185 residues long: TATA-box-binding protein 3 (185 aa).

2 tandem repeats follow at residues I7 to L84 and V100 to F178.

Belongs to the TBP family.

Its function is as follows. General factor that plays a role in the activation of archaeal genes transcribed by RNA polymerase. Binds specifically to the TATA box promoter element which lies close to the position of transcription initiation. In Methanosarcina mazei (strain ATCC BAA-159 / DSM 3647 / Goe1 / Go1 / JCM 11833 / OCM 88) (Methanosarcina frisia), this protein is TATA-box-binding protein 3.